The primary structure comprises 201 residues: GTP cyclohydrolase 1 (201 aa).

The interval 1–20 (MDATVKKMSPETSRPSREEA) is disordered. Residues C91, H94, and C162 each contribute to the Zn(2+) site.

This sequence belongs to the GTP cyclohydrolase I family. In terms of assembly, homomer.

The enzyme catalyses GTP + H2O = 7,8-dihydroneopterin 3'-triphosphate + formate + H(+). It functions in the pathway cofactor biosynthesis; 7,8-dihydroneopterin triphosphate biosynthesis; 7,8-dihydroneopterin triphosphate from GTP: step 1/1. This chain is GTP cyclohydrolase 1, found in Allorhizobium ampelinum (strain ATCC BAA-846 / DSM 112012 / S4) (Agrobacterium vitis (strain S4)).